A 1289-amino-acid chain; its full sequence is Ethylene-insensitive protein 2.1 (1289 aa).

The next 5 membrane-spanning stretches (helical) occupy residues 18-38, 48-68, 96-116, 128-148, and 155-175; these read LLPA…PGKW, FGFD…LCQY, FLGV…ILGI, LSTC…FATL, and SFLC…GVLI. The N-linked (GlcNAc...) asparagine glycan is linked to Asn-185. Residues 199 to 219 traverse the membrane as a helical segment; the sequence is LMSLLGASIMPHNFFLHSAIV. A glycan (N-linked (GlcNAc...) asparagine) is linked at Asn-227. A run of 7 helical transmembrane segments spans residues 235–255, 260–280, 288–308, 335–355, 356–376, 393–413, and 439–459; these read LNHF…NFVL, ANVF…MSLM, VAPF…AFSW, IIAV…GIYQ, LLIL…IPLF, FLEF…IIFV, and YIVL…LAAT. An N-linked (GlcNAc...) asparagine glycan is attached at Asn-521. The interval 611–659 is disordered; sequence LHTEKEDDEGDNWEPEDSSKGVPGSTLSLTSDGPGSFRSLSGKSDAGGN. Over residues 616–626 the composition is skewed to acidic residues; it reads EDDEGDNWEPE. Over residues 635–652 the composition is skewed to polar residues; sequence STLSLTSDGPGSFRSLSG. A phosphoserine mark is found at Ser-646 and Ser-663. Asn-745 carries an N-linked (GlcNAc...) asparagine glycan. The tract at residues 792–816 is disordered; it reads SIADSSERRYSGVRTPPSSDGWDNQ. Over residues 807-816 the composition is skewed to polar residues; sequence PPSSDGWDNQ. Thr-819 carries the phosphothreonine modification. Ser-923 carries the post-translational modification Phosphoserine. An N-linked (GlcNAc...) asparagine glycan is attached at Asn-1025. A disordered region spans residues 1208-1227; sequence HRSSPPASNGMLPPASKPGR. A Nuclear localization signal motif is present at residues 1274–1281; it reads LKRYKRRL.

Belongs to the NRAMP (TC 2.A.55) family.

It localises to the endoplasmic reticulum membrane. It is found in the nucleus. The protein resides in the cytoplasm. Functionally, central factor in signaling pathways regulated by ethylene (ET) and involved in various processes including development, plant defense, senescence, nucleotide sugar flux, and tropisms. Trafficking signal inducing ethylene response. The nuclear localization is both necessary and sufficient to activate EIN3-mediated transcription and ethylene responses. This chain is Ethylene-insensitive protein 2.1, found in Populus trichocarpa (Western balsam poplar).